The chain runs to 133 residues: ATP synthase epsilon chain, chloroplastic (133 aa).

It belongs to the ATPase epsilon chain family. As to quaternary structure, F-type ATPases have 2 components, CF(1) - the catalytic core - and CF(0) - the membrane proton channel. CF(1) has five subunits: alpha(3), beta(3), gamma(1), delta(1), epsilon(1). CF(0) has three main subunits: a, b and c.

Its subcellular location is the plastid. It is found in the chloroplast thylakoid membrane. Produces ATP from ADP in the presence of a proton gradient across the membrane. The polypeptide is ATP synthase epsilon chain, chloroplastic (Jasminum nudiflorum (Winter jasmine)).